The primary structure comprises 787 residues: MDASLEKKIADPTLAEMGKNLKEAMKMLEDSQRRTEEENGKKLLSGDIPGPLQGSGQDMVSILQLVQNLMHGDEDEQPQSTRIQNIGEQGHISLLGHSLGAYISTLDKEKLRKLTTRILSDTTLWLCRIFRYENGCAYFHEEEREGLAKICRLAIHSRYEDFVVDGFNVLYNRKPVLYLSAAARPGLGQYLCNQLGLPFPCLCRVPCNTVFGSQHQMDVAFLEKLIKDDIERGKLPLLLVANAGTAAVGHTDKIGRLKEVCEQYGIWLHVEGVNLATLALGYVSSSVLAATKCDSMTLTPGPWLGLPAVPAVTLYKHDDPALTLVSGLTSNKPADKLRALPLWLSLQYLGLDGIVERIKHACQLSQRLQESLKKVNHIKILVEDELSSPVVVFRFFQELPGSDPGLNAIPAPSAAASAVGRERHSCDALNRWLGEQLKQLVPMSGLTVMDLEVEGTCVRFSPLMTAAVLGTRGEDVDQLVACVQSKLPVLTCTLQLREEFKQEVEATAGLLYVDDPNWPGIGVVRYEHANDDKSSLKLDPEGEKIHAGLLKKLNELESDLTFKMGPEYKSMKSCIYIGMASDDIDISELVETIAVTAREIEEDSRLLENMTEVVRKGIQEAQVQLQKANEERLLEEGVLRQIPVVGSVLNWFSPVQASQKGRTFNLTAGSLESTEHTYVYKVQGSGVTPPQTPTGTRTKQRLPGQKPFKRSLRGSDAISETSSVGHIEDLEKMEQSSGGQEASEANSHERHPEAPAPPEAEPPGALQDGAQGLQDDRPQVEEPESLR.

The span at 29 to 41 (EDSQRRTEEENGK) shows a compositional bias: basic and acidic residues. The tract at residues 29–52 (EDSQRRTEEENGKKLLSGDIPGPL) is disordered. At Ser-653 the chain carries Phosphoserine. Residues 683–787 (QGSGVTPPQT…PQVEEPESLR (105 aa)) form a disordered region. Over residues 685–697 (SGVTPPQTPTGTR) the composition is skewed to polar residues. A phosphothreonine mark is found at Thr-688 and Thr-692. A phosphoserine mark is found at Ser-711, Ser-719, and Ser-723. Over residues 735 to 745 (QSSGGQEASEA) the composition is skewed to polar residues. Residues Ser-747 and Ser-785 each carry the phosphoserine modification. Basic and acidic residues predominate over residues 774 to 787 (QDDRPQVEEPESLR).

The protein belongs to the group II decarboxylase family. Pyridoxal 5'-phosphate serves as cofactor.

In Bos taurus (Bovine), this protein is Pyridoxal-dependent decarboxylase domain-containing protein 1 (PDXDC1).